The primary structure comprises 338 residues: Glycerol-3-phosphate dehydrogenase [NAD(P)+] 1 (338 aa).

Positions 11, 12, 32, 33, and 109 each coordinate NADPH. Positions 109, 140, and 142 each coordinate sn-glycerol 3-phosphate. Ala144 contributes to the NADPH binding site. Sn-glycerol 3-phosphate-binding residues include Lys195, Asp248, Ser258, Arg259, and Asn260. The active-site Proton acceptor is the Lys195. Arg259 serves as a coordination point for NADPH. Residues Val283 and Glu285 each contribute to the NADPH site.

Belongs to the NAD-dependent glycerol-3-phosphate dehydrogenase family.

It is found in the cytoplasm. It carries out the reaction sn-glycerol 3-phosphate + NAD(+) = dihydroxyacetone phosphate + NADH + H(+). It catalyses the reaction sn-glycerol 3-phosphate + NADP(+) = dihydroxyacetone phosphate + NADPH + H(+). It functions in the pathway membrane lipid metabolism; glycerophospholipid metabolism. Its function is as follows. Catalyzes the reduction of the glycolytic intermediate dihydroxyacetone phosphate (DHAP) to sn-glycerol 3-phosphate (G3P), the key precursor for phospholipid synthesis. The sequence is that of Glycerol-3-phosphate dehydrogenase [NAD(P)+] 1 from Lactobacillus delbrueckii subsp. bulgaricus (strain ATCC 11842 / DSM 20081 / BCRC 10696 / JCM 1002 / NBRC 13953 / NCIMB 11778 / NCTC 12712 / WDCM 00102 / Lb 14).